Here is a 387-residue protein sequence, read N- to C-terminus: Glutamate N-acetyltransferase (387 aa).

Substrate-binding residues include T140, K162, T173, E257, N382, and T387. T173 acts as the Nucleophile in catalysis.

The protein belongs to the ArgJ family. In terms of assembly, heterotetramer of two alpha and two beta chains.

Its subcellular location is the cytoplasm. The enzyme catalyses N(2)-acetyl-L-ornithine + L-glutamate = N-acetyl-L-glutamate + L-ornithine. It functions in the pathway amino-acid biosynthesis; L-arginine biosynthesis; L-ornithine and N-acetyl-L-glutamate from L-glutamate and N(2)-acetyl-L-ornithine (cyclic): step 1/1. Its function is as follows. Catalyzes the transfer of the acetyl group from N(2)-acetylornithine to glutamate, forming N-acetylglutamate and L-ornithine. This is Glutamate N-acetyltransferase from Methanopyrus kandleri (strain AV19 / DSM 6324 / JCM 9639 / NBRC 100938).